Reading from the N-terminus, the 367-residue chain is Beta sliding clamp (367 aa).

It belongs to the beta sliding clamp family. As to quaternary structure, forms a ring-shaped head-to-tail homodimer around DNA which binds and tethers DNA polymerases and other proteins to the DNA. The DNA replisome complex has a single clamp-loading complex (3 tau and 1 each of delta, delta', psi and chi subunits) which binds 3 Pol III cores (1 core on the leading strand and 2 on the lagging strand) each with a beta sliding clamp dimer. Additional proteins in the replisome are other copies of gamma, psi and chi, Ssb, DNA helicase and RNA primase.

Its subcellular location is the cytoplasm. Functionally, confers DNA tethering and processivity to DNA polymerases and other proteins. Acts as a clamp, forming a ring around DNA (a reaction catalyzed by the clamp-loading complex) which diffuses in an ATP-independent manner freely and bidirectionally along dsDNA. Initially characterized for its ability to contact the catalytic subunit of DNA polymerase III (Pol III), a complex, multichain enzyme responsible for most of the replicative synthesis in bacteria; Pol III exhibits 3'-5' exonuclease proofreading activity. The beta chain is required for initiation of replication as well as for processivity of DNA replication. This chain is Beta sliding clamp (dnaN), found in Pseudomonas putida (strain ATCC 47054 / DSM 6125 / CFBP 8728 / NCIMB 11950 / KT2440).